A 2620-amino-acid chain; its full sequence is Highly reducing polyketide synthase tazB (2620 aa).

The tract at residues 1 to 22 (MPFLNGNTTHHEAHSAEPDHGN) is disordered. In terms of domain architecture, Ketosynthase family 3 (KS3) spans 1-416 (MPFLNGNTTH…GTNAHCILDD (416 aa)). Positions 9-22 (THHEAHSAEPDHGN) are enriched in basic and acidic residues. Catalysis depends on for beta-ketoacyl synthase activity residues Cys-166, His-301, and His-340. The interval 460-481 (GFNKFDEPRGSDSAGSNANGSH) is disordered. The span at 470–481 (SDSAGSNANGSH) shows a compositional bias: low complexity. A malonyl-CoA:ACP transacylase (MAT) domain region spans residues 601–923 (VFTGQGAQYA…PYLATLSRKD (323 aa)). Residues 993–1128 (HDLFGAPVPD…GEVSPDLKKS (136 aa)) are N-terminal hotdog fold. Residues 993–1313 (HDLFGAPVPD…LAGIRLSPFK (321 aa)) form a dehydratase (DH) domain region. The region spanning 993-1318 (HDLFGAPVPD…LSPFKPESSE (326 aa)) is the PKS/mFAS DH domain. The active-site Proton acceptor; for dehydratase activity is His-1025. The tract at residues 1157-1318 (TAPVDFTPVY…LSPFKPESSE (162 aa)) is C-terminal hotdog fold. The active-site Proton donor; for dehydratase activity is the Asp-1225. The interval 1379–1680 (GLRESREMKD…VDFEASSSIY (302 aa)) is methyltransferase (CMet) domain. An enoyl reductase (ER) domain region spans residues 1910–2227 (GIDSLTWVTD…TGKSIGKVTL (318 aa)). Residues 2251-2425 (SFILAGGLGG…HGASVNLGAV (175 aa)) form a ketoreductase (KR) domain region. The region spanning 2539–2620 (EAARIIHKAL…VSLSSFTKFR (82 aa)) is the Carrier domain. The residue at position 2576 (Ser-2576) is an O-(pantetheine 4'-phosphoryl)serine.

The protein operates within secondary metabolite biosynthesis. Its function is as follows. Highly reducing polyketide synthase; part of the gene cluster that mediates the biosynthesis of azaterrilone A and other azaphilones, a class of fungal metabolites characterized by a highly oxygenated pyrano-quinone bicyclic core and exhibiting a broad range of bioactivities. The first step of the pathway begins with the non-reducing polyketide synthase tazA that assembles one acetyl-CoA starter unit, five malonyl-CoA units, and catalyzes a series of Claisen condensations, methylation, PT-mediated cyclization, and finally releases the first hexaketide precursor through the R-domain. The tazA product then undergoes reduction on its terminal ketone and the following pyran-ring formation by yet undetermined enzyme(s). Dehydration and enoyl reduction, possibly involving the trans-enoyl reductase tazE leads to the next intermediate. TazD is predicted as an acetyltransferase and might catalyze the acetylation steps leading to the synthesis of azaterrilone A. Azaterrilone A is not the final product of the taz pathway and both the highly reducing polyketide synthase tazB and the dual enzyme tazHJ catalyze late steps of the pathway, leading to the production of the 2 final stereoisomers that contain additional polyketide modification whose structures have still to be determined. The protein is Highly reducing polyketide synthase tazB of Aspergillus terreus (strain NIH 2624 / FGSC A1156).